A 272-amino-acid chain; its full sequence is Ribosomal RNA small subunit methyltransferase A (272 aa).

The S-adenosyl-L-methionine site is built by Asn-18, Leu-20, Gly-45, Glu-66, Asp-91, and Asn-113.

This sequence belongs to the class I-like SAM-binding methyltransferase superfamily. rRNA adenine N(6)-methyltransferase family. RsmA subfamily.

It localises to the cytoplasm. The enzyme catalyses adenosine(1518)/adenosine(1519) in 16S rRNA + 4 S-adenosyl-L-methionine = N(6)-dimethyladenosine(1518)/N(6)-dimethyladenosine(1519) in 16S rRNA + 4 S-adenosyl-L-homocysteine + 4 H(+). Functionally, specifically dimethylates two adjacent adenosines (A1518 and A1519) in the loop of a conserved hairpin near the 3'-end of 16S rRNA in the 30S particle. May play a critical role in biogenesis of 30S subunits. This Yersinia pestis bv. Antiqua (strain Antiqua) protein is Ribosomal RNA small subunit methyltransferase A.